Consider the following 265-residue polypeptide: Indole-3-glycerol phosphate synthase (265 aa).

It belongs to the TrpC family.

The enzyme catalyses 1-(2-carboxyphenylamino)-1-deoxy-D-ribulose 5-phosphate + H(+) = (1S,2R)-1-C-(indol-3-yl)glycerol 3-phosphate + CO2 + H2O. The protein operates within amino-acid biosynthesis; L-tryptophan biosynthesis; L-tryptophan from chorismate: step 4/5. The chain is Indole-3-glycerol phosphate synthase from Xanthomonas axonopodis pv. citri (strain 306).